The following is a 191-amino-acid chain: Polysulfide reductase chain B (191 aa).

4Fe-4S ferredoxin-type domains are found at residues Tyr5–Val34, Gly50–Asp83, and Gly84–Val113. Residues Cys14, Cys17, Cys20, Cys24, Cys61, Cys64, Cys69, Cys73, Cys93, Cys96, Cys99, Cys103, Cys120, Cys123, Cys136, and Cys140 each contribute to the [4Fe-4S] cluster site.

In terms of assembly, functional polysulfide reductase is made up of three different (A, B, and C) subunits.

In terms of biological role, component of the phosphorylative electron transport system with polysulfide as the terminal acceptor. In Wolinella succinogenes (strain ATCC 29543 / DSM 1740 / CCUG 13145 / JCM 31913 / LMG 7466 / NCTC 11488 / FDC 602W) (Vibrio succinogenes), this protein is Polysulfide reductase chain B (psrB).